A 441-amino-acid chain; its full sequence is CBL-interacting serine/threonine-protein kinase 3 (441 aa).

The Protein kinase domain occupies 14 to 269 (YEVGRTIGEG…PQEVFEDEWF (256 aa)). ATP-binding positions include 20–28 (IGEGTFAKV) and lysine 43. Residue aspartate 137 is the Proton acceptor of the active site. Positions 155 to 184 (DFGLSALSQQVRDDGLLHTSCGTPNYVAPE) are activation loop. An NAF domain is found at 307–331 (EQPAAINAFEIISMSRGLNLENLFD). Residues 337 to 366 (KRETRITLRGGANEIIEKIEEAAKPLGFDV) are PPI.

This sequence belongs to the protein kinase superfamily. CAMK Ser/Thr protein kinase family. SNF1 subfamily. In terms of assembly, interacts with CBL3 and CBL9. Requires Mn(2+) as cofactor. Mostly expressed in germinating seeds and young seedlings. Detected at low levels in roots, stems, leaves and flowers.

The catalysed reaction is L-seryl-[protein] + ATP = O-phospho-L-seryl-[protein] + ADP + H(+). It carries out the reaction L-threonyl-[protein] + ATP = O-phospho-L-threonyl-[protein] + ADP + H(+). In terms of biological role, involved in the resistance to some abiotic stresses (e.g. high salt, hyperosmotic stress) in young seedlings, by regulating the expression of several stress-inducible genes (cold- and salt-induced genes but not drought-responsive genes). Required for the ABA response during germination. CIPK serine-threonine protein kinases interact with CBL proteins. Binding of a CBL protein to the regulatory NAF domain of CIPK protein lead to the activation of the kinase in a calcium-dependent manner. The CBL9/CIPK3 complex acts in the regulation of abscisic acid response in seed germination. The polypeptide is CBL-interacting serine/threonine-protein kinase 3 (CIPK3) (Arabidopsis thaliana (Mouse-ear cress)).